The following is a 66-amino-acid chain: Large ribosomal subunit protein bL35 (66 aa).

It belongs to the bacterial ribosomal protein bL35 family.

The sequence is that of Large ribosomal subunit protein bL35 from Hyphomonas neptunium (strain ATCC 15444).